The sequence spans 470 residues: MAQRRPAGKKIPFQKDSFLQQFEKLAQSRKHHVLLESARGGRYSIAGLDPIATVKGKDGITTIKHGDEMLFKEGDPLRAFHSWFKTLETETNHEFPDFQGGAIGFLSYDYARYIENFKMLSLDDLETPDIYFLVFDDIAVYDHQEESLWLITHVNGSDQETADVKLSELEQMWLTELPAVTSREMKPETAGSFAAPFTEDGFSQAVEKIKQYIASGDVFQVNLSIRQSQSLSVHPYQIYKTLREVNPSPYMAYLETPDFQIICGSPELLVSKKGKLLETRPIAGTRSRGKTNEEDEALANELIHNEKERAEHVMLVDLERNDLGRVSRYGSVRVNEFMAIEKYSHVMHIVSNVQGELQDGYDAVDIIHAVFPGGTITGAPKVRTMEIIEELEPTRRGLYTGSIGWFGYNHDLQFNIVIRTIYATGGQAFMQSGAGVVIDSVPKHEYKESFKKAFAMQRALELSEEETKIR.

The protein belongs to the anthranilate synthase component I family. In terms of assembly, monomer. Heterodimer consisting of two non-identical subunits: a glutamine amidotransferase subunit (PabA) and a aminodeoxychorismate synthase subunit (PabB). It depends on Mg(2+) as a cofactor.

The enzyme catalyses chorismate + L-glutamine = 4-amino-4-deoxychorismate + L-glutamate. Its pathway is cofactor biosynthesis; tetrahydrofolate biosynthesis; 4-aminobenzoate from chorismate: step 1/2. In terms of biological role, part of a heterodimeric complex that catalyzes the two-step biosynthesis of 4-amino-4-deoxychorismate (ADC), a precursor of p-aminobenzoate (PABA) and tetrahydrofolate. In the first step, a glutamine amidotransferase (PabA) generates ammonia as a substrate that, along with chorismate, is used in the second step, catalyzed by aminodeoxychorismate synthase (PabB) to produce ADC. The protein is Aminodeoxychorismate synthase component 1 (pabB) of Bacillus subtilis (strain 168).